The sequence spans 264 residues: Major prion protein (264 aa).

The signal sequence occupies residues 1–24 (MVKSHIGSWILVLFVAMWSDVGLC). Positions 25–241 (KKRPKPGGGW…ESEAYYQRGA (217 aa)) are interaction with GRB2, ERI3 and SYN1. The interval 28-118 (PKPGGGWNTG…QWNKPSKPKT (91 aa)) is disordered. 6 tandem repeats follow at residues 54–62 (SQGGGGWGQ), 63–70 (PHGGGWGQ), 71–78 (PHGGGWGQ), 79–86 (PHGGGWGQ), 87–94 (PHGGGWGQ), and 95–103 (PHGGGGWGQ). The segment at 54–103 (SQGGGGWGQPHGGGWGQPHGGGWGQPHGGGWGQPHGGGWGQPHGGGGWGQ) is 6 X 8 AA tandem repeats of P-H-G-G-G-W-G-Q. The segment covering 55–107 (QGGGGWGQPHGGGWGQPHGGGWGQPHGGGWGQPHGGGWGQPHGGGGWGQGGTH) has biased composition (gly residues). Cu(2+) contacts are provided by histidine 72, glycine 73, glycine 74, histidine 80, glycine 81, glycine 82, histidine 88, glycine 89, glycine 90, histidine 96, glycine 98, and glycine 99. A disulfide bridge connects residues cysteine 190 and cysteine 225. Asparagine 192 and asparagine 208 each carry an N-linked (GlcNAc...) asparagine glycan. The GPI-anchor amidated alanine moiety is linked to residue alanine 241. A propeptide spans 242–264 (SVILFSSPPVILLISFLIFLIVG) (removed in mature form).

It belongs to the prion family. In terms of assembly, monomer and homodimer. Has a tendency to aggregate into amyloid fibrils containing a cross-beta spine, formed by a steric zipper of superposed beta-strands. Soluble oligomers may represent an intermediate stage on the path to fibril formation. Copper binding may promote oligomerization. Interacts with GRB2, APP, ERI3/PRNPIP and SYN1. Mislocalized cytosolically exposed PrP interacts with MGRN1; this interaction alters MGRN1 subcellular location and causes lysosomal enlargement. Interacts with KIAA1191.

Its subcellular location is the cell membrane. The protein localises to the golgi apparatus. In terms of biological role, its primary physiological function is unclear. Has cytoprotective activity against internal or environmental stresses. May play a role in neuronal development and synaptic plasticity. May be required for neuronal myelin sheath maintenance. May play a role in iron uptake and iron homeostasis. Soluble oligomers are toxic to cultured neuroblastoma cells and induce apoptosis (in vitro). Association with GPC1 (via its heparan sulfate chains) targets PRNP to lipid rafts. Also provides Cu(2+) or Zn(2+) for the ascorbate-mediated GPC1 deaminase degradation of its heparan sulfate side chains. This chain is Major prion protein (PRNP), found in Tragelaphus imberbis (Lesser kudu).